An 858-amino-acid polypeptide reads, in one-letter code: Bifunctional uridylyltransferase/uridylyl-removing enzyme (858 aa).

Positions 1–324 are uridylyltransferase; it reads MSAHAAPSPE…PATSGITRVL (324 aa). Residues 325–681 form a uridylyl-removing region; the sequence is SPDRFVEKQG…ARPSPIGDAL (357 aa). Positions 443–565 constitute an HD domain; it reads VDQHILMVLR…VGNERYLTAL (123 aa). 2 ACT domains span residues 682-761 and 790-858; these read QVLV…PEPS and ILSV…AIAV.

The protein belongs to the GlnD family. Mg(2+) is required as a cofactor.

It catalyses the reaction [protein-PII]-L-tyrosine + UTP = [protein-PII]-uridylyl-L-tyrosine + diphosphate. The enzyme catalyses [protein-PII]-uridylyl-L-tyrosine + H2O = [protein-PII]-L-tyrosine + UMP + H(+). Its activity is regulated as follows. Uridylyltransferase (UTase) activity is inhibited by glutamine, while glutamine activates uridylyl-removing (UR) activity. Modifies, by uridylylation and deuridylylation, the PII regulatory proteins (GlnB and homologs), in response to the nitrogen status of the cell that GlnD senses through the glutamine level. Under low glutamine levels, catalyzes the conversion of the PII proteins and UTP to PII-UMP and PPi, while under higher glutamine levels, GlnD hydrolyzes PII-UMP to PII and UMP (deuridylylation). Thus, controls uridylylation state and activity of the PII proteins, and plays an important role in the regulation of nitrogen fixation and metabolism. The polypeptide is Bifunctional uridylyltransferase/uridylyl-removing enzyme (Burkholderia lata (strain ATCC 17760 / DSM 23089 / LMG 22485 / NCIMB 9086 / R18194 / 383)).